A 506-amino-acid chain; its full sequence is Fe(3+)-transport system permease protein FbpB 2 (506 aa).

12 helical membrane-spanning segments follow: residues 9 to 29 (LTLL…YVIL), 57 to 77 (LLMV…AFLL), 90 to 110 (VAMT…WISL), 116 to 136 (VFWG…YLPV), 174 to 194 (IGSS…AVSI), 218 to 238 (ALLS…EIFF), 275 to 295 (IFIL…IVGT), 314 to 334 (FIIS…LVWA), 350 to 370 (PYLL…YFSI), 379 to 399 (TFFV…QTTL), 428 to 448 (LTLP…FLNL), and 480 to 500 (AAAT…VFLL). Residues 52–233 (LSNTMLLMVC…LMAICILIVF (182 aa)) enclose the ABC transmembrane type-1 1 domain. One can recognise an ABC transmembrane type-1 2 domain in the interval 310 to 500 (FSNSFIISGL…LFSGIPVFLL (191 aa)).

It belongs to the binding-protein-dependent transport system permease family. FbpB subfamily. As to quaternary structure, the complex is composed of two ATP-binding proteins (FbpC), two transmembrane proteins (FbpB) and a solute-binding protein (FbpA).

The protein resides in the cell inner membrane. Functionally, part of the ABC transporter complex FbpABC (TC 3.A.1.10.1) involved in Fe(3+) ions import. Probably responsible for the translocation of the substrate across the membrane. The protein is Fe(3+)-transport system permease protein FbpB 2 (fbpB2) of Haemophilus influenzae (strain ATCC 51907 / DSM 11121 / KW20 / Rd).